Here is a 314-residue protein sequence, read N- to C-terminus: Methionyl-tRNA formyltransferase (314 aa).

Residue 111-114 (SLLP) participates in (6S)-5,6,7,8-tetrahydrofolate binding.

The protein belongs to the Fmt family.

It carries out the reaction L-methionyl-tRNA(fMet) + (6R)-10-formyltetrahydrofolate = N-formyl-L-methionyl-tRNA(fMet) + (6S)-5,6,7,8-tetrahydrofolate + H(+). Attaches a formyl group to the free amino group of methionyl-tRNA(fMet). The formyl group appears to play a dual role in the initiator identity of N-formylmethionyl-tRNA by promoting its recognition by IF2 and preventing the misappropriation of this tRNA by the elongation apparatus. The sequence is that of Methionyl-tRNA formyltransferase from Chlorobium chlorochromatii (strain CaD3).